Reading from the N-terminus, the 462-residue chain is Probable peptidoglycan glycosyltransferase FtsW (462 aa).

A disordered region spans residues Met-1–Lys-28. The Cytoplasmic portion of the chain corresponds to Met-1–Ser-92. The span at Ser-13 to Gly-27 shows a compositional bias: basic residues. Residues Leu-93–Ile-113 traverse the membrane as a helical segment. Residues Ala-114–Tyr-127 are Periplasmic-facing. Residues Ala-128 to Phe-148 traverse the membrane as a helical segment. Over Arg-149–Tyr-158 the chain is Cytoplasmic. A helical membrane pass occupies residues Ala-159–Gly-179. Over Lys-180–Gly-192 the chain is Periplasmic. A helical transmembrane segment spans residues Ile-193–Val-215. Topologically, residues Arg-216–Ser-223 are cytoplasmic. A helical membrane pass occupies residues Phe-224–Leu-244. The Periplasmic portion of the chain corresponds to Glu-245–Asp-247. Residues Met-248–Asn-268 traverse the membrane as a helical segment. Topologically, residues Gly-269–Lys-270 are cytoplasmic. The chain crosses the membrane as a helical span at residues Leu-271–Pro-291. Over Trp-292–Asp-349 the chain is Periplasmic. Residues Phe-350 to Leu-370 traverse the membrane as a helical segment. Over Phe-371–Lys-398 the chain is Cytoplasmic. The helical transmembrane segment at Gly-399–Leu-419 threads the bilayer. Residues Pro-420–Thr-425 are Periplasmic-facing. The helical transmembrane segment at Leu-426–Leu-446 threads the bilayer. At Leu-447–Val-462 the chain is on the cytoplasmic side.

Belongs to the SEDS family. FtsW subfamily.

It localises to the cell inner membrane. It carries out the reaction [GlcNAc-(1-&gt;4)-Mur2Ac(oyl-L-Ala-gamma-D-Glu-L-Lys-D-Ala-D-Ala)](n)-di-trans,octa-cis-undecaprenyl diphosphate + beta-D-GlcNAc-(1-&gt;4)-Mur2Ac(oyl-L-Ala-gamma-D-Glu-L-Lys-D-Ala-D-Ala)-di-trans,octa-cis-undecaprenyl diphosphate = [GlcNAc-(1-&gt;4)-Mur2Ac(oyl-L-Ala-gamma-D-Glu-L-Lys-D-Ala-D-Ala)](n+1)-di-trans,octa-cis-undecaprenyl diphosphate + di-trans,octa-cis-undecaprenyl diphosphate + H(+). The protein operates within cell wall biogenesis; peptidoglycan biosynthesis. Its function is as follows. Peptidoglycan polymerase that is essential for cell division. In Burkholderia thailandensis (strain ATCC 700388 / DSM 13276 / CCUG 48851 / CIP 106301 / E264), this protein is Probable peptidoglycan glycosyltransferase FtsW.